The following is a 143-amino-acid chain: Nucleoside diphosphate kinase (143 aa).

The ATP site is built by lysine 11, phenylalanine 59, arginine 87, threonine 93, arginine 104, and asparagine 114. Residue histidine 117 is the Pros-phosphohistidine intermediate of the active site.

This sequence belongs to the NDK family. In terms of assembly, homotetramer. Mg(2+) serves as cofactor.

The protein resides in the cytoplasm. It catalyses the reaction a 2'-deoxyribonucleoside 5'-diphosphate + ATP = a 2'-deoxyribonucleoside 5'-triphosphate + ADP. The catalysed reaction is a ribonucleoside 5'-diphosphate + ATP = a ribonucleoside 5'-triphosphate + ADP. Functionally, major role in the synthesis of nucleoside triphosphates other than ATP. The ATP gamma phosphate is transferred to the NDP beta phosphate via a ping-pong mechanism, using a phosphorylated active-site intermediate. This chain is Nucleoside diphosphate kinase, found in Idiomarina loihiensis (strain ATCC BAA-735 / DSM 15497 / L2-TR).